Reading from the N-terminus, the 200-residue chain is NAD(P)H dehydrogenase (quinone) (200 aa).

Residues 4–191 (ILVLYHSLWG…TIARFQGRHV (188 aa)) form the Flavodoxin-like domain. FMN is bound by residues 10–15 (SLWGHV) and 79–81 (TRF). Position 12 (Trp12) interacts with NAD(+). Substrate is bound at residue Trp99. FMN contacts are provided by residues 114 to 120 (STATQHG) and His135.

The protein belongs to the WrbA family. Requires FMN as cofactor.

It catalyses the reaction a quinone + NADH + H(+) = a quinol + NAD(+). The catalysed reaction is a quinone + NADPH + H(+) = a quinol + NADP(+). This chain is NAD(P)H dehydrogenase (quinone), found in Acidithiobacillus ferrooxidans (strain ATCC 53993 / BNL-5-31) (Leptospirillum ferrooxidans (ATCC 53993)).